A 379-amino-acid polypeptide reads, in one-letter code: Chaperone protein DnaJ (379 aa).

In terms of domain architecture, J spans 5 to 70; that stretch reads DFYEVLGVSR…QKRSAYDQYG (66 aa). The CR-type zinc-finger motif lies at 134 to 212; it reads GCDKEIEVPT…CHGEGRVHKT (79 aa). Positions 147, 150, 164, 167, 186, 189, 200, and 203 each coordinate Zn(2+). CXXCXGXG motif repeat units lie at residues 147 to 154, 164 to 171, 186 to 193, and 200 to 207; these read CDPCEGTG, CSTCHGQG, CPTCHGKG, and CNSCHGEG.

It belongs to the DnaJ family. In terms of assembly, homodimer. Zn(2+) is required as a cofactor.

It localises to the cytoplasm. In terms of biological role, participates actively in the response to hyperosmotic and heat shock by preventing the aggregation of stress-denatured proteins and by disaggregating proteins, also in an autonomous, DnaK-independent fashion. Unfolded proteins bind initially to DnaJ; upon interaction with the DnaJ-bound protein, DnaK hydrolyzes its bound ATP, resulting in the formation of a stable complex. GrpE releases ADP from DnaK; ATP binding to DnaK triggers the release of the substrate protein, thus completing the reaction cycle. Several rounds of ATP-dependent interactions between DnaJ, DnaK and GrpE are required for fully efficient folding. Also involved, together with DnaK and GrpE, in the DNA replication of plasmids through activation of initiation proteins. The polypeptide is Chaperone protein DnaJ (Aliivibrio fischeri (strain ATCC 700601 / ES114) (Vibrio fischeri)).